The following is a 197-amino-acid chain: Probable inosine/xanthosine triphosphatase (197 aa).

Thr9–Lys14 provides a ligand contact to substrate. Mg(2+) is bound by residues Asp36 and Asp65.

Belongs to the YjjX NTPase family. In terms of assembly, homodimer. Mg(2+) is required as a cofactor. The cofactor is Mn(2+).

It carries out the reaction XTP + H2O = XDP + phosphate + H(+). The enzyme catalyses ITP + H2O = IDP + phosphate + H(+). Functionally, phosphatase that hydrolyzes non-canonical purine nucleotides such as XTP and ITP to their respective diphosphate derivatives. Probably excludes non-canonical purines from DNA/RNA precursor pool, thus preventing their incorporation into DNA/RNA and avoiding chromosomal lesions. The polypeptide is Probable inosine/xanthosine triphosphatase (Aeropyrum pernix (strain ATCC 700893 / DSM 11879 / JCM 9820 / NBRC 100138 / K1)).